Reading from the N-terminus, the 344-residue chain is Tripartite motif-containing protein 44 (344 aa).

Disordered stretches follow at residues 1–25 (MASG…EPDE) and 66–165 (AWTP…EFDP). Residues 75-92 (GAGKEEAEVKVEQEREIE) are compositionally biased toward basic and acidic residues. Acidic residues predominate over residues 93–165 (SEAGEESESE…ETEAESEFDP (73 aa)). Residues 174 to 215 (VAKRKCPDHGLDLSTYCQEDRQLICVLCPVIGAHQGHQLSTL) form a B box-type zinc finger. Residues Cys-179, His-182, Cys-201, and His-207 each contribute to the Zn(2+) site. Positions 290 to 325 (AHVTEILADIQSHMDRLMTQMAQAKEQLDTSNESAE) form a coiled coil. The tract at residues 309 to 344 (QMAQAKEQLDTSNESAEPKAEGDEEGPSGASEEEDT) is disordered. Residues 330 to 344 (GDEEGPSGASEEEDT) show a composition bias toward acidic residues. Ser-336 and Ser-339 each carry phosphoserine.

Interacts (via coiled coil) with TRIM17 (via coiled coil). As to expression, highly expressed in testis.

Its function is as follows. May play a role in the process of differentiation and maturation of neuronal cells. May regulate the activity of TRIM17. Is a negative regulator of PAX6 expression. This chain is Tripartite motif-containing protein 44 (TRIM44), found in Homo sapiens (Human).